We begin with the raw amino-acid sequence, 734 residues long: Photosystem I P700 chlorophyll a apoprotein A2 (734 aa).

Transmembrane regions (helical) follow at residues 46–69 (IFAS…FHVA), 135–158 (LYTG…LHLQ), 175–199 (LNHH…HVAI), 273–291 (IAHH…GHMY), 330–353 (IHFQ…QHMY), 369–395 (AALY…IFFI), 417–439 (AIIS…LYVH), and 517–535 (FLVH…LILV). Residues C559 and C568 each contribute to the [4Fe-4S] cluster site. 2 consecutive transmembrane segments (helical) span residues 575 to 596 (AFYL…YWHW) and 643 to 665 (LSVW…MFLI). 3 residues coordinate chlorophyll a: H654, M662, and Y670. W671 contacts phylloquinone. A helical membrane pass occupies residues 707 to 727 (LVGLAHFSVGYIFTYAAFLIA).

This sequence belongs to the PsaA/PsaB family. The PsaA/B heterodimer binds the P700 chlorophyll special pair and subsequent electron acceptors. PSI consists of a core antenna complex that captures photons, and an electron transfer chain that converts photonic excitation into a charge separation. The eukaryotic PSI reaction center is composed of at least 11 subunits. It depends on P700 is a chlorophyll a/chlorophyll a' dimer, A0 is one or more chlorophyll a, A1 is one or both phylloquinones and FX is a shared 4Fe-4S iron-sulfur center. as a cofactor.

The protein resides in the plastid. It localises to the chloroplast thylakoid membrane. The enzyme catalyses reduced [plastocyanin] + hnu + oxidized [2Fe-2S]-[ferredoxin] = oxidized [plastocyanin] + reduced [2Fe-2S]-[ferredoxin]. Its function is as follows. PsaA and PsaB bind P700, the primary electron donor of photosystem I (PSI), as well as the electron acceptors A0, A1 and FX. PSI is a plastocyanin-ferredoxin oxidoreductase, converting photonic excitation into a charge separation, which transfers an electron from the donor P700 chlorophyll pair to the spectroscopically characterized acceptors A0, A1, FX, FA and FB in turn. Oxidized P700 is reduced on the lumenal side of the thylakoid membrane by plastocyanin. This Dioscorea elephantipes (Elephant's foot yam) protein is Photosystem I P700 chlorophyll a apoprotein A2.